The sequence spans 647 residues: Threonine--tRNA ligase (647 aa).

The TGS domain occupies 1–61 (MINITFPDGA…TEDGSIEIVT (61 aa)). Residues 242–540 (DHRKLGKELD…LIENYKGAFP (299 aa)) are catalytic. The Zn(2+) site is built by Cys-336, His-387, and His-517.

It belongs to the class-II aminoacyl-tRNA synthetase family. In terms of assembly, homodimer. The cofactor is Zn(2+).

Its subcellular location is the cytoplasm. It carries out the reaction tRNA(Thr) + L-threonine + ATP = L-threonyl-tRNA(Thr) + AMP + diphosphate + H(+). Its function is as follows. Catalyzes the attachment of threonine to tRNA(Thr) in a two-step reaction: L-threonine is first activated by ATP to form Thr-AMP and then transferred to the acceptor end of tRNA(Thr). Also edits incorrectly charged L-seryl-tRNA(Thr). This chain is Threonine--tRNA ligase, found in Streptococcus pneumoniae serotype 19F (strain G54).